The sequence spans 1187 residues: Disease resistance protein TAO1 (1187 aa).

Positions tryptophan 38–leucine 202 constitute a TIR domain. Residue glutamate 113 is part of the active site. The 262-residue stretch at glutamate 217 to leucine 478 folds into the NB-ARC domain. 14 LRR repeats span residues aspartate 498–isoleucine 522, serine 611–proline 633, phenylalanine 635–asparagine 658, lysine 660–alanine 679, threonine 680–alanine 703, threonine 704–leucine 727, threonine 728–asparagine 750, threonine 752–isoleucine 775, asparagine 799–leucine 823, threonine 824–leucine 849, alanine 870–isoleucine 894, threonine 895–alanine 918, asparagine 920–isoleucine 942, and cysteine 953–aspartate 974.

It carries out the reaction NAD(+) + H2O = ADP-D-ribose + nicotinamide + H(+). TIR-NB-LRR receptor-like protein that contributes to disease resistance induced by the Pseudomonas syringae type III effector AvrB. Acts additively with RPM1 to generate a full disease resistance response to P.syringae expressing this type III effector. The chain is Disease resistance protein TAO1 from Arabidopsis thaliana (Mouse-ear cress).